Here is a 534-residue protein sequence, read N- to C-terminus: MKLTLWTYEGPPHVGAMRVATGMTGMHYVLHAPQGDTYADLLFTMIERRGKRPPVSYTTFQARDLGSDTAELFQSACRDAYERFQPQAIMVGSSCTAELIQDDTGGLADALSLPVPVVHLELPSYQRKENFGADESFLQICRKLARPMERTEKVSCNLLGPTALGFRHRDDILEVTRLLEGMGIAVNAVAPMGASPADIARLGAAHFNVLLYPETGESAARWAEKTLKQPYTKTVPIGVGATRDFVAEVAALAGVAPVADDSRLRQPWWSASVDSTYLTGKRVFLFGDATHVIAAARVARDEMGFEVVGMGCYNREFARPMRAAAKGYGLEALVTDDYLEVEEAIQALAPELILGTQMERHIAKRLGIPCAVISAPVHVQDFPARYSPQMGFEGANVLFDTWIHPLTMGLEEHLLTMFREDFEFHDEAGPSHHGGKAVPASAPRADEAAEALPLTGAETAEGGSIPPEAVPPAEAAAVPAGEIVWLTDAERELKKIPFFVRGKARRNTEKFAAEKGLTRISLETLYEAKAHYAR.

Residue aspartate 36 coordinates [4Fe-4S] cluster. Catalysis depends on aspartate 274, which acts as the Proton donor. 409-410 (GL) contacts substrate. The segment at 426–446 (DEAGPSHHGGKAVPASAPRAD) is disordered.

The protein belongs to the ChlB/BchB/BchZ family. In terms of assembly, protochlorophyllide reductase is composed of three subunits; BchL, BchN and BchB. Forms a heterotetramer of two BchB and two BchN subunits. The cofactor is [4Fe-4S] cluster.

The enzyme catalyses chlorophyllide a + oxidized 2[4Fe-4S]-[ferredoxin] + 2 ADP + 2 phosphate = protochlorophyllide a + reduced 2[4Fe-4S]-[ferredoxin] + 2 ATP + 2 H2O. It participates in porphyrin-containing compound metabolism; bacteriochlorophyll biosynthesis (light-independent). Its function is as follows. Component of the dark-operative protochlorophyllide reductase (DPOR) that uses Mg-ATP and reduced ferredoxin to reduce ring D of protochlorophyllide (Pchlide) to form chlorophyllide a (Chlide). This reaction is light-independent. The NB-protein (BchN-BchB) is the catalytic component of the complex. In Cereibacter sphaeroides (strain ATCC 17023 / DSM 158 / JCM 6121 / CCUG 31486 / LMG 2827 / NBRC 12203 / NCIMB 8253 / ATH 2.4.1.) (Rhodobacter sphaeroides), this protein is Light-independent protochlorophyllide reductase subunit B.